Consider the following 91-residue polypeptide: DNA-directed RNA polymerase subunit Rpo11 (91 aa).

This sequence belongs to the archaeal Rpo11/eukaryotic RPB11/RPC19 RNA polymerase subunit family. Part of the RNA polymerase complex.

It localises to the cytoplasm. It catalyses the reaction RNA(n) + a ribonucleoside 5'-triphosphate = RNA(n+1) + diphosphate. In terms of biological role, DNA-dependent RNA polymerase (RNAP) catalyzes the transcription of DNA into RNA using the four ribonucleoside triphosphates as substrates. The protein is DNA-directed RNA polymerase subunit Rpo11 of Methanothrix thermoacetophila (strain DSM 6194 / JCM 14653 / NBRC 101360 / PT) (Methanosaeta thermophila).